The primary structure comprises 344 residues: tRNA N6-adenosine threonylcarbamoyltransferase (344 aa).

The Fe cation site is built by histidine 110 and histidine 114. Substrate-binding positions include 133–137 (VMSGA), aspartate 166, glycine 179, and asparagine 278. Aspartate 303 contacts Fe cation.

This sequence belongs to the KAE1 / TsaD family. Fe(2+) is required as a cofactor.

The protein localises to the cytoplasm. It carries out the reaction L-threonylcarbamoyladenylate + adenosine(37) in tRNA = N(6)-L-threonylcarbamoyladenosine(37) in tRNA + AMP + H(+). Its function is as follows. Required for the formation of a threonylcarbamoyl group on adenosine at position 37 (t(6)A37) in tRNAs that read codons beginning with adenine. Is involved in the transfer of the threonylcarbamoyl moiety of threonylcarbamoyl-AMP (TC-AMP) to the N6 group of A37, together with TsaE and TsaB. TsaD likely plays a direct catalytic role in this reaction. In Chlamydia felis (strain Fe/C-56) (Chlamydophila felis), this protein is tRNA N6-adenosine threonylcarbamoyltransferase.